Consider the following 196-residue polypeptide: Small ribosomal subunit protein uS4c (196 aa).

Residues 16–36 are disordered; the sequence is GALPGLTRKTPKSGSNLKKKF. The S4 RNA-binding domain maps to 89–169; the sequence is MRLDNILFRL…LPKHLTIDTL (81 aa).

This sequence belongs to the universal ribosomal protein uS4 family. Part of the 30S ribosomal subunit. Contacts protein S5. The interaction surface between S4 and S5 is involved in control of translational fidelity.

Its subcellular location is the plastid. It is found in the chloroplast. Its function is as follows. One of the primary rRNA binding proteins, it binds directly to 16S rRNA where it nucleates assembly of the body of the 30S subunit. With S5 and S12 plays an important role in translational accuracy. In Cinna latifolia (Drooping woodreed), this protein is Small ribosomal subunit protein uS4c (rps4).